We begin with the raw amino-acid sequence, 284 residues long: UPF0276 protein PA3283 (284 aa).

This sequence belongs to the UPF0276 family.

This Pseudomonas aeruginosa (strain ATCC 15692 / DSM 22644 / CIP 104116 / JCM 14847 / LMG 12228 / 1C / PRS 101 / PAO1) protein is UPF0276 protein PA3283.